The sequence spans 366 residues: UDP-N-acetylglucosamine 2-epimerase (366 aa).

His-206 is an active-site residue.

This sequence belongs to the UDP-N-acetylglucosamine 2-epimerase family. Homodimer.

The protein localises to the cytoplasm. The enzyme catalyses UDP-N-acetyl-alpha-D-glucosamine = UDP-N-acetyl-alpha-D-mannosamine. Functionally, catalyzes the reversible epimerization at C-2 of UDP-N-acetylglucosamine (UDP-GlcNAc) to produce UDP-N-acetylmannosamine (UDP-ManNAc), the activated donor of ManNAc residues. The sequence is that of UDP-N-acetylglucosamine 2-epimerase (wecB) from Methanococcus maripaludis (strain DSM 14266 / JCM 13030 / NBRC 101832 / S2 / LL).